Here is a 241-residue protein sequence, read N- to C-terminus: Triosephosphate isomerase (241 aa).

Substrate is bound at residue 9-11 (NWK). The active-site Electrophile is histidine 88. Catalysis depends on glutamate 158, which acts as the Proton acceptor. Residues glycine 164, serine 203, and 224 to 225 (GG) each bind substrate.

This sequence belongs to the triosephosphate isomerase family. As to quaternary structure, homodimer.

The protein resides in the cytoplasm. It catalyses the reaction D-glyceraldehyde 3-phosphate = dihydroxyacetone phosphate. It participates in carbohydrate biosynthesis; gluconeogenesis. Its pathway is carbohydrate degradation; glycolysis; D-glyceraldehyde 3-phosphate from glycerone phosphate: step 1/1. Its function is as follows. Involved in the gluconeogenesis. Catalyzes stereospecifically the conversion of dihydroxyacetone phosphate (DHAP) to D-glyceraldehyde-3-phosphate (G3P). The sequence is that of Triosephosphate isomerase from Dichelobacter nodosus (strain VCS1703A).